A 131-amino-acid chain; its full sequence is Small ribosomal subunit protein eS8 (131 aa).

The segment at 1–42 (MKLGAYYKGGDLKKPSGGKKRKVRKTKKKALGGGPPQIPKLG) is disordered. A compositionally biased stretch (basic residues) spans 16 to 30 (SGGKKRKVRKTKKKA).

Belongs to the eukaryotic ribosomal protein eS8 family. In terms of assembly, part of the 30S ribosomal subunit.

This chain is Small ribosomal subunit protein eS8, found in Pyrobaculum aerophilum (strain ATCC 51768 / DSM 7523 / JCM 9630 / CIP 104966 / NBRC 100827 / IM2).